The chain runs to 1134 residues: Protocadherin-18 (1134 aa).

An N-terminal signal peptide occupies residues 1–27 (MYQMNAKMHFTFVFALLVVSFNLDVLG). 6 consecutive Cadherin domains span residues 28-137 (KNLK…SPQF), 138-246 (SRSL…SPAF), 247-354 (EQQS…KPEI), 361-465 (PGKE…PPHF), 466-576 (QRSR…VPVV), and 582-697 (RNNT…APLD). Residues 28 to 699 (KNLKYRIYEE…SVSQAPLDVS (672 aa)) lie on the Extracellular side of the membrane. N-linked (GlcNAc...) asparagine glycosylation occurs at N103. An N-linked (GlcNAc...) asparagine glycan is attached at N269. The N-linked (GlcNAc...) asparagine glycan is linked to N559. The chain crosses the membrane as a helical span at residues 700-720 (MIIIISLGAICAVLLVIMVLF). At 721–1134 (ATRCNREKKD…NKLLQDVRQS (414 aa)) the chain is on the cytoplasmic side. 3 disordered regions span residues 768–800 (TLPI…NSHQ), 868–888 (SLKD…DLGR), and 941–1003 (DYRS…TSSL). Over residues 791–800 (GSRQSHNSHQ) the composition is skewed to polar residues. Over residues 868-877 (SLKDSGRGDS) the composition is skewed to basic and acidic residues. Residues 892-1134 (IDRLLGEGFS…NKLLQDVRQS (243 aa)) form an interaction with DAB1 region.

Interacts with DAB1.

The protein localises to the cell membrane. In terms of biological role, potential calcium-dependent cell-adhesion protein. This Bos taurus (Bovine) protein is Protocadherin-18 (PCDH18).